The chain runs to 476 residues: Adenosylhomocysteinase (476 aa).

The substrate site is built by threonine 67, aspartate 142, and glutamate 202. An NAD(+)-binding site is contributed by 203–205 (TTT). Substrate-binding residues include lysine 232 and aspartate 236. NAD(+) is bound by residues asparagine 237, 266-271 (GYGDVG), glutamate 289, asparagine 324, 345-347 (IGH), and asparagine 390.

The protein belongs to the adenosylhomocysteinase family. NAD(+) serves as cofactor.

The protein localises to the cytoplasm. It catalyses the reaction S-adenosyl-L-homocysteine + H2O = L-homocysteine + adenosine. It participates in amino-acid biosynthesis; L-homocysteine biosynthesis; L-homocysteine from S-adenosyl-L-homocysteine: step 1/1. Functionally, may play a key role in the regulation of the intracellular concentration of adenosylhomocysteine. This is Adenosylhomocysteinase from Synechococcus sp. (strain CC9311).